The chain runs to 250 residues: Hemocyanin, units C and D (250 aa).

His-1 lines the Cu cation pocket. A unit C region spans residues 1–106 (HGSTKWCPSP…RAWIEPVTSA (106 aa)). A disulfide bond links Cys-7 and Cys-18. The segment at residues 19–21 (CHH) is a cross-link (2'-(S-cysteinyl)-histidine (Cys-His)). Residues His-21 and His-143 each contribute to the Cu cation site. Residues 107–250 (VRIRKNLNDL…DAQDVIYNNH (144 aa)) are unit D. A disulfide bridge links Cys-149 with Cys-160. A cross-link (2'-(S-cysteinyl)-histidine (Cys-His)) is located at residues 161-163 (CLH). His-172 contributes to the Cu cation binding site.

The protein belongs to the tyrosinase family. Hemocyanin subfamily. In terms of assembly, decamers of large identical subunits (390 kDa), each containing 8 globular oxygen-binding functional units. Cu(2+) is required as a cofactor.

Hemocyanins are copper-containing oxygen carriers occurring freely dissolved in the hemolymph of many mollusks and arthropods. The sequence is that of Hemocyanin, units C and D from Sepia officinalis (Common cuttlefish).